The following is a 335-amino-acid chain: Pregnancy-specific beta-1-glycoprotein 2 (335 aa).

The N-terminal stretch at 1-34 (MGPLSAPPCTEHIKWKGLLVTASLLNFWNLPTTA) is a signal peptide. One can recognise an Ig-like V-type domain in the interval 35–144 (QVTIEAQPPK…TGYFTFTLYL (110 aa)). 4 N-linked (GlcNAc...) asparagine glycosylation sites follow: asparagine 61, asparagine 104, asparagine 111, and asparagine 199. Ig-like C2-type domains lie at 147–234 (PKPS…VTLN) and 239–317 (PDLP…TSLT). 2 disulfide bridges follow: cysteine 169–cysteine 217 and cysteine 261–cysteine 301.

This sequence belongs to the immunoglobulin superfamily. CEA family.

Its subcellular location is the secreted. The sequence is that of Pregnancy-specific beta-1-glycoprotein 2 (PSG2) from Homo sapiens (Human).